Consider the following 783-residue polypeptide: Probable alpha,alpha-trehalose-phosphate synthase [UDP-forming] 3 (783 aa).

Residues 11-456 (QTLLVVANRL…GFDFLSELND (446 aa)) form a glycosyltransferase region.

This sequence in the N-terminal section; belongs to the glycosyltransferase 20 family. It in the C-terminal section; belongs to the trehalose phosphatase family.

The catalysed reaction is D-glucose 6-phosphate + UDP-alpha-D-glucose = alpha,alpha-trehalose 6-phosphate + UDP + H(+). This chain is Probable alpha,alpha-trehalose-phosphate synthase [UDP-forming] 3 (TPS3), found in Arabidopsis thaliana (Mouse-ear cress).